A 353-amino-acid polypeptide reads, in one-letter code: Protein RecA (353 aa).

68-75 serves as a coordination point for ATP; it reads GPESSGKT.

This sequence belongs to the RecA family.

Its subcellular location is the cytoplasm. In terms of biological role, can catalyze the hydrolysis of ATP in the presence of single-stranded DNA, the ATP-dependent uptake of single-stranded DNA by duplex DNA, and the ATP-dependent hybridization of homologous single-stranded DNAs. It interacts with LexA causing its activation and leading to its autocatalytic cleavage. The sequence is that of Protein RecA from Roseiflexus castenholzii (strain DSM 13941 / HLO8).